The chain runs to 394 residues: D-mannose isomerase (394 aa).

Residues H251 and H380 each act as proton donor/acceptor in the active site.

The protein belongs to the N-acylglucosamine 2-epimerase family. In terms of assembly, monomer.

It catalyses the reaction D-mannose = D-fructose. The enzyme catalyses D-lyxose = D-xylulose. In terms of biological role, catalyzes the reversible isomerization of D-mannose to D-fructose. Can also isomerize D-lyxose, with lower efficiency. In longer reaction with a higher concentration of enzyme, it can isomerize 4-OH D-mannose derivatives (D-talose and 4-O-monosaccharyl-D-mannose). Cannot use D-glucose. This chain is D-mannose isomerase, found in Marinomonas mediterranea (strain ATCC 700492 / JCM 21426 / NBRC 103028 / MMB-1).